The primary structure comprises 266 residues: Dihydropteroate synthase (266 aa).

A Pterin-binding domain is found at 12-260; that stretch reads AAIMGILNVT…DVKANQDIVA (249 aa). Asparagine 19 provides a ligand contact to Mg(2+). (7,8-dihydropterin-6-yl)methyl diphosphate is bound by residues threonine 59, aspartate 93, asparagine 112, aspartate 176, lysine 212, and 248–250; that span reads RVH.

It belongs to the DHPS family. As to quaternary structure, homodimer or homotrimer. It depends on Mg(2+) as a cofactor.

It carries out the reaction (7,8-dihydropterin-6-yl)methyl diphosphate + 4-aminobenzoate = 7,8-dihydropteroate + diphosphate. The protein operates within cofactor biosynthesis; tetrahydrofolate biosynthesis; 7,8-dihydrofolate from 2-amino-4-hydroxy-6-hydroxymethyl-7,8-dihydropteridine diphosphate and 4-aminobenzoate: step 1/2. In terms of biological role, catalyzes the condensation of para-aminobenzoate (pABA) with 6-hydroxymethyl-7,8-dihydropterin diphosphate (DHPt-PP) to form 7,8-dihydropteroate (H2Pte), the immediate precursor of folate derivatives. In Streptococcus pyogenes serotype M3 (strain ATCC BAA-595 / MGAS315), this protein is Dihydropteroate synthase (folP).